The primary structure comprises 288 residues: Large ribosomal subunit protein uL2 (288 aa).

The segment covering 29–43 (PEKSLTRGFKRDKGR) has biased composition (basic and acidic residues). 2 disordered regions span residues 29–59 (PEKS…GGHK) and 210–288 (GRNR…GRQS). 2 stretches are compositionally biased toward basic residues: residues 210–221 (GRNRWKGRRPKV) and 272–288 (VRRR…GRQS).

This sequence belongs to the universal ribosomal protein uL2 family. Part of the 50S ribosomal subunit. Forms a bridge to the 30S subunit in the 70S ribosome.

In terms of biological role, one of the primary rRNA binding proteins. Required for association of the 30S and 50S subunits to form the 70S ribosome, for tRNA binding and peptide bond formation. It has been suggested to have peptidyltransferase activity; this is somewhat controversial. Makes several contacts with the 16S rRNA in the 70S ribosome. In Thermosynechococcus vestitus (strain NIES-2133 / IAM M-273 / BP-1), this protein is Large ribosomal subunit protein uL2.